The sequence spans 918 residues: Protein translocase subunit SecA (918 aa).

Residues Gln87, 105 to 109, and Asp500 contribute to the ATP site; that span reads GEGKT. A disordered region spans residues 876-918; that stretch reads AGALPVAETLERDTPESWRNTPRNAPCPCGSGKKYKHCHGQAR. Positions 902, 904, 913, and 914 each coordinate Zn(2+). The span at 908–918 shows a compositional bias: basic residues; it reads KKYKHCHGQAR.

It belongs to the SecA family. As to quaternary structure, monomer and homodimer. Part of the essential Sec protein translocation apparatus which comprises SecA, SecYEG and auxiliary proteins SecDF-YajC and YidC. Zn(2+) serves as cofactor.

It localises to the cell inner membrane. Its subcellular location is the cytoplasm. It carries out the reaction ATP + H2O + cellular proteinSide 1 = ADP + phosphate + cellular proteinSide 2.. In terms of biological role, part of the Sec protein translocase complex. Interacts with the SecYEG preprotein conducting channel. Has a central role in coupling the hydrolysis of ATP to the transfer of proteins into and across the cell membrane, serving both as a receptor for the preprotein-SecB complex and as an ATP-driven molecular motor driving the stepwise translocation of polypeptide chains across the membrane. The polypeptide is Protein translocase subunit SecA (Rhodospirillum centenum (strain ATCC 51521 / SW)).